Reading from the N-terminus, the 619-residue chain is Chaperone protein HscA homolog (619 aa).

This sequence belongs to the heat shock protein 70 family.

Functionally, chaperone involved in the maturation of iron-sulfur cluster-containing proteins. Has a low intrinsic ATPase activity which is markedly stimulated by HscB. The sequence is that of Chaperone protein HscA homolog from Pseudomonas aeruginosa (strain UCBPP-PA14).